Here is a 396-residue protein sequence, read N- to C-terminus: Phosphoglycerate kinase (396 aa).

Substrate contacts are provided by residues 21 to 23 (DFN), Arg-37, 60 to 63 (HLGR), Arg-121, and Arg-154. ATP is bound by residues Lys-205, Gly-296, Glu-327, and 353–356 (GGDS).

The protein belongs to the phosphoglycerate kinase family. As to quaternary structure, monomer.

It localises to the cytoplasm. The enzyme catalyses (2R)-3-phosphoglycerate + ATP = (2R)-3-phospho-glyceroyl phosphate + ADP. Its pathway is carbohydrate degradation; glycolysis; pyruvate from D-glyceraldehyde 3-phosphate: step 2/5. The chain is Phosphoglycerate kinase from Anaeromyxobacter sp. (strain K).